Consider the following 89-residue polypeptide: Large ribosomal subunit protein bL31B (89 aa).

A disordered region spans residues 70–89 (RVQRFESRRRRRQQQSGEQG).

It belongs to the bacterial ribosomal protein bL31 family. Type B subfamily. As to quaternary structure, part of the 50S ribosomal subunit.

This is Large ribosomal subunit protein bL31B from Rubrobacter xylanophilus (strain DSM 9941 / JCM 11954 / NBRC 16129 / PRD-1).